The following is a 356-amino-acid chain: Phosphoribosylformylglycinamidine cyclo-ligase (356 aa).

It belongs to the AIR synthase family.

It is found in the cytoplasm. It catalyses the reaction 2-formamido-N(1)-(5-O-phospho-beta-D-ribosyl)acetamidine + ATP = 5-amino-1-(5-phospho-beta-D-ribosyl)imidazole + ADP + phosphate + H(+). The protein operates within purine metabolism; IMP biosynthesis via de novo pathway; 5-amino-1-(5-phospho-D-ribosyl)imidazole from N(2)-formyl-N(1)-(5-phospho-D-ribosyl)glycinamide: step 2/2. This Desulfotalea psychrophila (strain LSv54 / DSM 12343) protein is Phosphoribosylformylglycinamidine cyclo-ligase.